Here is an 898-residue protein sequence, read N- to C-terminus: Phosphoenolpyruvate carboxylase (898 aa).

Catalysis depends on residues His138 and Lys561.

It belongs to the PEPCase type 1 family. Requires Mg(2+) as cofactor.

It catalyses the reaction oxaloacetate + phosphate = phosphoenolpyruvate + hydrogencarbonate. Its function is as follows. Forms oxaloacetate, a four-carbon dicarboxylic acid source for the tricarboxylic acid cycle. This Streptococcus pneumoniae serotype 4 (strain ATCC BAA-334 / TIGR4) protein is Phosphoenolpyruvate carboxylase.